The primary structure comprises 172 residues: C-phycocyanin-2 beta subunit (172 aa).

Asn-72 carries the N4-methylasparagine modification. Residues Cys-82 and Cys-153 each contribute to the (2R,3E)-phycocyanobilin site.

It belongs to the phycobiliprotein family. Heterodimer of an alpha and a beta subunit, which further assembles into trimers and the trimers into hexamers. Post-translationally, contains two covalently linked bilin chromophores.

Its subcellular location is the cellular thylakoid membrane. Light-harvesting photosynthetic bile pigment-protein from the phycobiliprotein complex (phycobilisome, PBS). Phycocyanin is the major phycobiliprotein in the PBS rod. In Pseudanabaena tenuis (strain PCC 7409), this protein is C-phycocyanin-2 beta subunit (cpcB2).